We begin with the raw amino-acid sequence, 941 residues long: Isoleucine--tRNA ligase (941 aa).

The 'HIGH' region motif lies at 58–68 (PYANGNIHLGH). Glu-564 contacts L-isoleucyl-5'-AMP. The 'KMSKS' region motif lies at 605 to 609 (KMSKS). Lys-608 is a binding site for ATP. Cys-904, Cys-907, Cys-924, and Cys-927 together coordinate Zn(2+).

The protein belongs to the class-I aminoacyl-tRNA synthetase family. IleS type 1 subfamily. As to quaternary structure, monomer. The cofactor is Zn(2+).

The protein localises to the cytoplasm. It carries out the reaction tRNA(Ile) + L-isoleucine + ATP = L-isoleucyl-tRNA(Ile) + AMP + diphosphate. Catalyzes the attachment of isoleucine to tRNA(Ile). As IleRS can inadvertently accommodate and process structurally similar amino acids such as valine, to avoid such errors it has two additional distinct tRNA(Ile)-dependent editing activities. One activity is designated as 'pretransfer' editing and involves the hydrolysis of activated Val-AMP. The other activity is designated 'posttransfer' editing and involves deacylation of mischarged Val-tRNA(Ile). The protein is Isoleucine--tRNA ligase of Hahella chejuensis (strain KCTC 2396).